The chain runs to 445 residues: Phosphoglucosamine mutase (445 aa).

Catalysis depends on S102, which acts as the Phosphoserine intermediate. Positions 102, 241, 243, and 245 each coordinate Mg(2+). The residue at position 102 (S102) is a Phosphoserine.

It belongs to the phosphohexose mutase family. It depends on Mg(2+) as a cofactor. Post-translationally, activated by phosphorylation.

The catalysed reaction is alpha-D-glucosamine 1-phosphate = D-glucosamine 6-phosphate. In terms of biological role, catalyzes the conversion of glucosamine-6-phosphate to glucosamine-1-phosphate. This chain is Phosphoglucosamine mutase, found in Serratia proteamaculans (strain 568).